We begin with the raw amino-acid sequence, 355 residues long: Iron deficiency-induced protein A (355 aa).

The tat-type signal signal peptide spans 1–34 (MEKVGRRVFLGMGAAATAYVTHHLWNQNAESSYA). The Fe cation site is built by histidine 49, tyrosine 50, tyrosine 180, tyrosine 236, and tyrosine 237.

This sequence belongs to the bacterial solute-binding protein 1 family. Post-translationally, predicted to be exported by the Tat system. The position of the signal peptide cleavage has not been experimentally proven.

The protein resides in the cellular thylakoid membrane. Its function is as follows. Plays an important role in protecting the acceptor side of photosystem II (PSII) against oxidative damage, especially under iron-limiting growth conditions. Functionally, may also be part of a periplasmic ABC transporter complex involved in iron import. The polypeptide is Iron deficiency-induced protein A (idiA) (Thermosynechococcus vestitus (strain NIES-2133 / IAM M-273 / BP-1)).